The following is a 283-amino-acid chain: Glutamate racemase (283 aa).

Residues 28 to 29 and 60 to 61 contribute to the substrate site; these read DS and YG. Cys-92 serves as the catalytic Proton donor/acceptor. 93–94 serves as a coordination point for substrate; that stretch reads NT. Residue Cys-204 is the Proton donor/acceptor of the active site. Residue 205–206 participates in substrate binding; sequence TH.

This sequence belongs to the aspartate/glutamate racemases family.

The catalysed reaction is L-glutamate = D-glutamate. Its pathway is cell wall biogenesis; peptidoglycan biosynthesis. Functionally, provides the (R)-glutamate required for cell wall biosynthesis. This chain is Glutamate racemase, found in Salmonella enteritidis PT4 (strain P125109).